Reading from the N-terminus, the 101-residue chain is Apolipoprotein C-II (101 aa).

The N-terminal stretch at 1–22 is a signal peptide; that stretch reads MGTRFLLALCLVLLVLGFEVQG. Positions 23–28 are cleaved as a propeptide — removed in mature form; the sequence is AQLPQQ. The interval 66–74 is lipid binding; the sequence is AVDEKLRDL. The segment at 78–101 is lipoprotein lipase cofactor; that stretch reads STAAMSTYTGIFTDQVLSVLKGEE.

It belongs to the apolipoprotein C2 family. In terms of processing, proapolipoprotein C-II is synthesized as a sialic acid containing glycoprotein which is subsequently desialylated prior to its proteolytic processing. Post-translationally, proapolipoprotein C-II, the major form found in plasma undergoes proteolytic cleavage of its N-terminal hexapeptide to generate apolipoprotein C-II, which occurs as the minor form in plasma.

It localises to the secreted. Functionally, component of chylomicrons, very low-density lipoproteins (VLDL), low-density lipoproteins (LDL), and high-density lipoproteins (HDL) in plasma. Plays an important role in lipoprotein metabolism as an activator of lipoprotein lipase. Both proapolipoprotein C-II and apolipoprotein C-II can activate lipoprotein lipase. In Papio anubis (Olive baboon), this protein is Apolipoprotein C-II (APOC2).